The following is a 164-amino-acid chain: Lipoprotein signal peptidase (164 aa).

Helical transmembrane passes span 6–26 (LGVL…LWLL), 39–59 (VLPF…GWFS), 65–85 (GQIL…IWMA), and 88–108 (TTKL…GNAI). Residues D118 and D140 contribute to the active site. The chain crosses the membrane as a helical span at residues 141–161 (VAIVVGVAALLYDSLIGLPAA).

Belongs to the peptidase A8 family.

It is found in the cell inner membrane. The enzyme catalyses Release of signal peptides from bacterial membrane prolipoproteins. Hydrolyzes -Xaa-Yaa-Zaa-|-(S,diacylglyceryl)Cys-, in which Xaa is hydrophobic (preferably Leu), and Yaa (Ala or Ser) and Zaa (Gly or Ala) have small, neutral side chains.. It participates in protein modification; lipoprotein biosynthesis (signal peptide cleavage). Functionally, this protein specifically catalyzes the removal of signal peptides from prolipoproteins. This Rhodopseudomonas palustris (strain ATCC BAA-98 / CGA009) protein is Lipoprotein signal peptidase.